The following is a 205-amino-acid chain: Protein PAXX (205 aa).

Residues phenylalanine 39–alanine 81 enclose the PISA domain. Phosphothreonine is present on threonine 147. The segment covering threonine 147 to glycine 159 has biased composition (polar residues). A disordered region spans residues threonine 147–threonine 205. The residue at position 150 (serine 150) is a Phosphoserine. The mediates interaction with XRCC5/Ku80 and XRCC6/Ku70 and association with the non-homologous end joining core complex stretch occupies residues serine 172–threonine 205. The XLM signature appears at phenylalanine 191–threonine 205.

This sequence belongs to the XRCC4-XLF family. PAXX subfamily. As to quaternary structure, homodimer. Interacts with the DNA-bound XRCC5/Ku80 and XRCC6/Ku70 heterodimer (Ku complex); the interaction is direct. Associated component of the non-homologous end joining (NHEJ) complex, composed of the core proteins PRKDC, LIG4, XRCC4, XRCC6/Ku70, XRCC5/Ku86 and NHEJ1/XLF. Interacts with POLL (DNA polymerase lambda); promoting POLL recruitment to double-strand breaks (DSBs) and stimulation of the end-filling activity of POLL. In terms of processing, phosphorylation may inhibit interaction with the DNA-bound XRCC5/Ku80 and XRCC6/Ku70 heterodimer (Ku complex).

It is found in the nucleus. Its subcellular location is the chromosome. Its function is as follows. Non-essential DNA repair protein involved in DNA non-homologous end joining (NHEJ); participates in double-strand break (DSB) repair and V(D)J recombination. May act as a scaffold required for accumulation of the Ku heterodimer, composed of XRCC5/Ku80 and XRCC6/Ku70, at double-strand break sites and promote the assembly and/or stability of the NHEJ machinery. Involved in NHEJ by promoting the ligation of blunt-ended DNA ends. Together with NHEJ1/XLF, collaborates with DNA polymerase lambda (POLL) to promote joining of non-cohesive DNA ends. Constitutes a non-essential component of classical NHEJ: has a complementary but distinct function with NHEJ1/XLF in DNA repair. This chain is Protein PAXX, found in Mus musculus (Mouse).